The primary structure comprises 187 residues: Acireductone dioxygenase (187 aa).

Residues histidine 90, histidine 92, glutamate 96, and histidine 135 each coordinate Fe(2+). Ni(2+) contacts are provided by histidine 90, histidine 92, glutamate 96, and histidine 135.

This sequence belongs to the acireductone dioxygenase (ARD) family. It depends on Fe(2+) as a cofactor. Requires Ni(2+) as cofactor.

It is found in the cytoplasm. Its subcellular location is the nucleus. The enzyme catalyses 1,2-dihydroxy-5-(methylsulfanyl)pent-1-en-3-one + O2 = 4-methylsulfanyl-2-oxobutanoate + formate + 2 H(+). The catalysed reaction is 1,2-dihydroxy-5-(methylsulfanyl)pent-1-en-3-one + O2 = 3-(methylsulfanyl)propanoate + CO + formate + 2 H(+). It participates in amino-acid biosynthesis; L-methionine biosynthesis via salvage pathway; L-methionine from S-methyl-5-thio-alpha-D-ribose 1-phosphate: step 5/6. Catalyzes 2 different reactions between oxygen and the acireductone 1,2-dihydroxy-3-keto-5-methylthiopentene (DHK-MTPene) depending upon the metal bound in the active site. Fe-containing acireductone dioxygenase (Fe-ARD) produces formate and 2-keto-4-methylthiobutyrate (KMTB), the alpha-ketoacid precursor of methionine in the methionine recycle pathway. Ni-containing acireductone dioxygenase (Ni-ARD) produces methylthiopropionate, carbon monoxide and formate, and does not lie on the methionine recycle pathway. The polypeptide is Acireductone dioxygenase (Drosophila pseudoobscura pseudoobscura (Fruit fly)).